The sequence spans 184 residues: SsrA-binding protein (184 aa).

Residues 1 to 11 are compositionally biased toward polar residues; it reads MAAKKSTPTDS. Residues 1 to 31 form a disordered region; it reads MAAKKSTPTDSGKSKGKKNKAQKGAGQKGAG.

Belongs to the SmpB family.

Its subcellular location is the cytoplasm. Its function is as follows. Required for rescue of stalled ribosomes mediated by trans-translation. Binds to transfer-messenger RNA (tmRNA), required for stable association of tmRNA with ribosomes. tmRNA and SmpB together mimic tRNA shape, replacing the anticodon stem-loop with SmpB. tmRNA is encoded by the ssrA gene; the 2 termini fold to resemble tRNA(Ala) and it encodes a 'tag peptide', a short internal open reading frame. During trans-translation Ala-aminoacylated tmRNA acts like a tRNA, entering the A-site of stalled ribosomes, displacing the stalled mRNA. The ribosome then switches to translate the ORF on the tmRNA; the nascent peptide is terminated with the 'tag peptide' encoded by the tmRNA and targeted for degradation. The ribosome is freed to recommence translation, which seems to be the essential function of trans-translation. In Corynebacterium jeikeium (strain K411), this protein is SsrA-binding protein.